A 170-amino-acid polypeptide reads, in one-letter code: Putative 3-methyladenine DNA glycosylase (170 aa).

The protein belongs to the DNA glycosylase MPG family.

The sequence is that of Putative 3-methyladenine DNA glycosylase from Sodalis glossinidius.